Consider the following 218-residue polypeptide: Adenylate kinase (218 aa).

10-15 (GAGKGT) is an ATP binding site. The tract at residues 30-59 (STGDMFRAAMANQTEMGRLAKSFIDKGELV) is NMP. AMP is bound by residues Thr-31, Arg-36, 57 to 59 (ELV), 86 to 89 (GYPR), and Gln-93. An LID region spans residues 127-165 (GRFICRSCGSTYHKVFNPTKVEGTCDVCGGHEFFQREDD). Arg-128 contacts ATP. Positions 131 and 134 each coordinate Zn(2+). 137-138 (TY) lines the ATP pocket. Cys-151 and Cys-154 together coordinate Zn(2+). Residues Arg-162 and Arg-173 each contribute to the AMP site. Gln-201 is an ATP binding site.

This sequence belongs to the adenylate kinase family. As to quaternary structure, monomer.

The protein resides in the cytoplasm. It carries out the reaction AMP + ATP = 2 ADP. It participates in purine metabolism; AMP biosynthesis via salvage pathway; AMP from ADP: step 1/1. Functionally, catalyzes the reversible transfer of the terminal phosphate group between ATP and AMP. Plays an important role in cellular energy homeostasis and in adenine nucleotide metabolism. The sequence is that of Adenylate kinase from Streptococcus thermophilus (strain CNRZ 1066).